The following is a 156-amino-acid chain: Oxidized purine nucleoside triphosphate hydrolase (156 aa).

The Nudix hydrolase domain maps to 3-132; that stretch reads TSKLLTLVLV…WFPLMLQKKR (130 aa). Residue threonine 8 participates in 2-oxo-dATP binding. Residues threonine 8, lysine 23, asparagine 33, and 35–38 contribute to the O(6)-methyl-dGMP site; that span reads FGGK. Lysine 23 contributes to the 8-oxo-dGTP binding site. 2-oxo-dATP-binding positions include asparagine 33 and 35–38; that span reads FGGK. Mg(2+)-binding residues include glycine 36, glutamate 52, glutamate 55, glutamate 56, and glutamate 100. A Nudix box motif is present at residues 37 to 58; it reads GKVQTGETIEQAARRELLEESG. 2-oxo-dATP is bound at residue 117–120; the sequence is WADD. Residue 117 to 120 coordinates O(6)-methyl-dGMP; that stretch reads WADD.

Belongs to the Nudix hydrolase family. As to quaternary structure, monomer. Requires Mg(2+) as cofactor.

The protein localises to the cytoplasm. It is found in the cytosol. It localises to the mitochondrion matrix. Its subcellular location is the nucleus. The catalysed reaction is 2-oxo-dATP + H2O = 2-oxo-dAMP + diphosphate + H(+). It carries out the reaction 2-oxo-ATP + H2O = 2-oxo-AMP + diphosphate + H(+). It catalyses the reaction 8-oxo-dGTP + H2O = 8-oxo-dGMP + diphosphate + H(+). The enzyme catalyses 8-oxo-dATP + H2O = 8-oxo-dAMP + diphosphate + H(+). The catalysed reaction is O(6)-methyl-dGTP + H2O = O(6)-methyl-dGMP + diphosphate + H(+). It carries out the reaction N(6)-methyl-dATP + H2O = N(6)-methyl-dAMP + diphosphate + H(+). It catalyses the reaction N(6)-methyl-ATP + H2O = N(6)-methyl-AMP + diphosphate + H(+). Its activity is regulated as follows. Inhibited by TH588. In terms of biological role, oxidized purine nucleoside triphosphate hydrolase which is a prominent sanitizer of the oxidized nucleotide pool. Catalyzes the hydrolysis of 2-oxo-dATP (2-hydroxy-dATP) into 2-oxo-dAMP. Also has a significant hydrolase activity toward 2-oxo-ATP, 8-oxo-dGTP and 8-oxo-dATP. Through the hydrolysis of oxidized purine nucleoside triphosphates, prevents their incorporation into DNA and the subsequent transversions A:T to C:G and G:C to T:A. Also catalyzes the hydrolysis of methylated purine nucleoside triphosphate preventing their integration into DNA. Through this antimutagenic activity protects cells from oxidative stress. The polypeptide is Oxidized purine nucleoside triphosphate hydrolase (nudt1) (Danio rerio (Zebrafish)).